The following is a 654-amino-acid chain: Broad substrate specificity ATP-binding cassette transporter ABCG2 (654 aa).

Residues 1–394 (MSSSNVEVFI…KNLLGNPQAS (394 aa)) are Cytoplasmic-facing. The region spanning 37 to 286 (LSFHNICYRV…FESAGYHCEA (250 aa)) is the ABC transporter domain. ATP-binding positions include 80 to 87 (GPTGGGKS), 184 to 190 (RGVSGGE), E211, and H243. Positions 388-650 (LGNPQASIAQ…TIAYLKLLFL (263 aa)) constitute an ABC transmembrane type-2 domain. The chain crosses the membrane as a helical span at residues 395 to 415 (IAQIIVTVILGLVIGAIYFGL). Topologically, residues 416–427 (NNDSTGIQNRAG) are extracellular. The N-linked (GlcNAc...) asparagine glycan is linked to N417. A helical transmembrane segment spans residues 428-448 (VLFFLTTNQCFSSVSAVELFV). Residues 449–476 (VEKKLFIHEYISGYYRVSSYFFGKLLSD) lie on the Cytoplasmic side of the membrane. The chain crosses the membrane as a helical span at residues 477–497 (LLPMRMLPSIIFTCIVYFMLG). Topologically, residues 498-505 (LKPTADAF) are extracellular. A helical membrane pass occupies residues 506-526 (FIMMFTLMMVAYSASSMALAI). Topologically, residues 527–534 (AAGQSVVS) are cytoplasmic. Residues 535 to 555 (VATLLMTICFVFMMIFSGLLV) traverse the membrane as a helical segment. N-linked (GlcNAc...) asparagine glycans are attached at residues N556, N595, and N599. Residues 556-629 (NLTTIASWLS…LSPWGLWKNH (74 aa)) lie on the Extracellular side of the membrane. The cysteines at positions 591 and 607 are disulfide-linked. Residues 630–650 (VALACMIVIFLTIAYLKLLFL) form a helical membrane-spanning segment. At 651-654 (KKYS) the chain is on the cytoplasmic side.

It belongs to the ABC transporter superfamily. ABCG family. Eye pigment precursor importer (TC 3.A.1.204) subfamily. Homodimer; disulfide-linked. The minimal functional unit is a homodimer, but the major oligomeric form in plasma membrane is a homotetramer with possibility of higher order oligomerization up to homododecamers. In terms of processing, N-glycosylated. Glycosylation-deficient ABCG2 is normally expressed and functional. Post-translationally, phosphorylated. Phosphorylation may regulate the localization to the plasma membrane, the homooligomerization and therefore, the activity of the transporter.

Its subcellular location is the cell membrane. The protein localises to the apical cell membrane. It is found in the mitochondrion membrane. It carries out the reaction ATP + H2O + xenobioticSide 1 = ADP + phosphate + xenobioticSide 2.. The enzyme catalyses urate(in) + ATP + H2O = urate(out) + ADP + phosphate + H(+). The catalysed reaction is indoxyl sulfate(in) + ATP + H2O = indoxyl sulfate(out) + ADP + phosphate + H(+). It catalyses the reaction sphing-4-enine 1-phosphate(in) + ATP + H2O = sphing-4-enine 1-phosphate(out) + ADP + phosphate + H(+). It carries out the reaction estrone 3-sulfate(in) + ATP + H2O = estrone 3-sulfate(out) + ADP + phosphate + H(+). The enzyme catalyses dehydroepiandrosterone 3-sulfate(in) + ATP + H2O = dehydroepiandrosterone 3-sulfate(out) + ADP + phosphate + H(+). The catalysed reaction is 4-methylumbelliferone sulfate(in) + ATP + H2O = 4-methylumbelliferone sulfate(out) + ADP + phosphate + H(+). It catalyses the reaction 5,7-dimethyl-2-methylamino-4-(3-pyridylmethyl)-1,3-benzothiazol-6-yl beta-D-glucuronate(in) + ATP + H2O = 5,7-dimethyl-2-methylamino-4-(3-pyridylmethyl)-1,3-benzothiazol-6-yl beta-D-glucuronate(out) + ADP + phosphate + H(+). It carries out the reaction 4-methylumbelliferone beta-D-glucuronate(in) + ATP + H2O = 4-methylumbelliferone beta-D-glucuronate(out) + ADP + phosphate + H(+). The enzyme catalyses 5,7-dimethyl-2-methylamino-4-(3-pyridylmethyl)-1,3-benzothiazol-6-yl sulfate(in) + ATP + H2O = 5,7-dimethyl-2-methylamino-4-(3-pyridylmethyl)-1,3-benzothiazol-6-yl sulfate(out) + ADP + phosphate + H(+). The catalysed reaction is 17beta-estradiol 17-O-(beta-D-glucuronate)(in) + ATP + H2O = 17beta-estradiol 17-O-(beta-D-glucuronate)(out) + ADP + phosphate + H(+). It catalyses the reaction methotrexate(in) + ATP + H2O = methotrexate(out) + ADP + phosphate + H(+). It carries out the reaction riboflavin(in) + ATP + H2O = riboflavin(out) + ADP + phosphate + H(+). The enzyme catalyses pheophorbide a(in) + ATP + H2O = pheophorbide a(out) + ADP + phosphate + H(+). The catalysed reaction is itaconate(in) + ATP + H2O = itaconate(out) + ADP + phosphate + H(+). Its function is as follows. Broad substrate specificity ATP-dependent transporter of the ATP-binding cassette (ABC) family that actively extrudes a wide variety of physiological compounds, dietary toxins and xenobiotics from cells. Involved in porphyrin homeostasis, mediating the export of protoporphyrin IX (PPIX) from both mitochondria to cytosol and cytosol to extracellular space, it also functions in the cellular export of heme. Also mediates the efflux of sphingosine-1-P from cells. Acts as a urate exporter functioning in both renal and extrarenal urate excretion. In kidney, it also functions as a physiological exporter of the uremic toxin indoxyl sulfate. Also involved in the excretion of steroids like estrone 3-sulfate/E1S, 3beta-sulfooxy-androst-5-en-17-one/DHEAS, and other sulfate conjugates. Mediates the secretion of the riboflavin and biotin vitamins into milk. Extrudes pheophorbide a, a phototoxic porphyrin catabolite of chlorophyll, reducing its bioavailability. Plays an important role in the exclusion of xenobiotics from the brain. It confers to cells a resistance to multiple drugs and other xenobiotics including mitoxantrone, pheophorbide, camptothecin, methotrexate, azidothymidine, and the anthracyclines daunorubicin and doxorubicin, through the control of their efflux. In placenta, it limits the penetration of drugs from the maternal plasma into the fetus. May play a role in early stem cell self-renewal by blocking differentiation. In inflammatory macrophages, exports itaconate from the cytosol to the extracellular compartment and limits the activation of TFEB-dependent lysosome biogenesis involved in antibacterial innate immune response. This Macaca mulatta (Rhesus macaque) protein is Broad substrate specificity ATP-binding cassette transporter ABCG2 (ABCG2).